The chain runs to 124 residues: Putative RNA polymerase II transcriptional coactivator (124 aa).

The disordered stretch occupies residues 1–61 (MSSSSSSEDE…GRLKDSDGNE (61 aa)). Basic and acidic residues-rich tracts occupy residues 11 to 21 (LEKKVTKEQKK) and 39 to 58 (QEVKKAKNEEEVSGRLKDSD).

It belongs to the transcriptional coactivator PC4 family.

Its subcellular location is the nucleus. General coactivator that functions cooperatively with TAFs and mediates functional interactions between upstream activators and the general transcriptional machinery. Binds single-stranded DNA. In Caenorhabditis elegans, this protein is Putative RNA polymerase II transcriptional coactivator.